We begin with the raw amino-acid sequence, 328 residues long: NADH-quinone oxidoreductase subunit H (328 aa).

The next 8 membrane-spanning stretches (helical) occupy residues 10-30 (IIKI…GTYF), 80-100 (IAPV…PFLP), 118-138 (IGIL…LLGG), 155-175 (AVFI…IMMV), 191-211 (ITSW…IAAF), 243-263 (LFFI…SLLF), 272-292 (LLGA…FLWT), and 306-326 (WLCW…TAIV).

The protein belongs to the complex I subunit 1 family. In terms of assembly, NDH-1 is composed of 14 different subunits. Subunits NuoA, H, J, K, L, M, N constitute the membrane sector of the complex.

The protein resides in the cell inner membrane. The enzyme catalyses a quinone + NADH + 5 H(+)(in) = a quinol + NAD(+) + 4 H(+)(out). Its function is as follows. NDH-1 shuttles electrons from NADH, via FMN and iron-sulfur (Fe-S) centers, to quinones in the respiratory chain. The immediate electron acceptor for the enzyme in this species is believed to be ubiquinone. Couples the redox reaction to proton translocation (for every two electrons transferred, four hydrogen ions are translocated across the cytoplasmic membrane), and thus conserves the redox energy in a proton gradient. This subunit may bind ubiquinone. This is NADH-quinone oxidoreductase subunit H from Sulfurimonas denitrificans (strain ATCC 33889 / DSM 1251) (Thiomicrospira denitrificans (strain ATCC 33889 / DSM 1251)).